The primary structure comprises 344 residues: Cinnamoyl-CoA reductase 1 (344 aa).

At serine 7 the chain carries Phosphoserine. Residues glycine 17 to alanine 23, arginine 42, lysine 48, aspartate 68 to leucine 69, threonine 88 to serine 90, tyrosine 161, lysine 165, proline 188 to valine 191, and serine 203 contribute to the NADP(+) site. Cysteine 154 and cysteine 162 are disulfide-bonded. The active-site Proton donor is lysine 165. Residues glutamine 317–serine 344 form a disordered region.

It belongs to the NAD(P)-dependent epimerase/dehydratase family. Dihydroflavonol-4-reductase subfamily. In terms of tissue distribution, expressed in leaves, stems and flowers.

The enzyme catalyses (E)-cinnamaldehyde + NADP(+) + CoA = (E)-cinnamoyl-CoA + NADPH + H(+). It functions in the pathway aromatic compound metabolism; phenylpropanoid biosynthesis. Involved in the latter stages of lignin biosynthesis. Catalyzes one of the last steps of monolignol biosynthesis, the conversion of cinnamoyl-CoAs into their corresponding cinnamaldehydes. The sequence is that of Cinnamoyl-CoA reductase 1 from Arabidopsis thaliana (Mouse-ear cress).